A 513-amino-acid polypeptide reads, in one-letter code: 2-isopropylmalate synthase (513 aa).

In terms of domain architecture, Pyruvate carboxyltransferase spans 4 to 266; that stretch reads IEFFDTSLRD…QSPLKLSETA (263 aa). The Mn(2+) site is built by Asp-13, His-201, His-203, and Asn-237. A regulatory domain region spans residues 390–513; that stretch reads ILDNVQIDGH…VEQISAHDGI (124 aa).

Belongs to the alpha-IPM synthase/homocitrate synthase family. LeuA type 1 subfamily. Homodimer. Mn(2+) is required as a cofactor.

It is found in the cytoplasm. The enzyme catalyses 3-methyl-2-oxobutanoate + acetyl-CoA + H2O = (2S)-2-isopropylmalate + CoA + H(+). It functions in the pathway amino-acid biosynthesis; L-leucine biosynthesis; L-leucine from 3-methyl-2-oxobutanoate: step 1/4. Its function is as follows. Catalyzes the condensation of the acetyl group of acetyl-CoA with 3-methyl-2-oxobutanoate (2-ketoisovalerate) to form 3-carboxy-3-hydroxy-4-methylpentanoate (2-isopropylmalate). This is 2-isopropylmalate synthase from Lactococcus lactis subsp. lactis (strain IL1403) (Streptococcus lactis).